Consider the following 185-residue polypeptide: Signal peptidase I P (185 aa).

The Cytoplasmic segment spans residues methionine 1–aspartate 14. Residues tryptophan 15–phenylalanine 34 form a helical membrane-spanning segment. Topologically, residues glutamate 35–lysine 185 are extracellular. Residues serine 43 and lysine 85 contribute to the active site.

The protein belongs to the peptidase S26 family.

The protein localises to the cell membrane. It carries out the reaction Cleavage of hydrophobic, N-terminal signal or leader sequences from secreted and periplasmic proteins.. This is Signal peptidase I P (sipP) from Bacillus subtilis subsp. natto.